A 258-amino-acid polypeptide reads, in one-letter code: Alpha-fibrinogenase-like (258 aa).

The N-terminal stretch at 1 to 18 is a signal peptide; it reads MVLIRVLANLLVLQLSYA. A propeptide spanning residues 19–24 is cleaved from the precursor; that stretch reads QKSSEL. The region spanning 25 to 249 is the Peptidase S1 domain; the sequence is VVGGHPCNIY…YTDWIHSIIA (225 aa). Intrachain disulfides connect cysteine 31-cysteine 163, cysteine 50-cysteine 66, cysteine 98-cysteine 256, cysteine 142-cysteine 210, cysteine 174-cysteine 189, and cysteine 200-cysteine 225. N-linked (GlcNAc...) asparagine glycosylation occurs at asparagine 44. Catalysis depends on charge relay system residues histidine 65 and aspartate 110. The active-site Charge relay system is serine 204.

This sequence belongs to the peptidase S1 family. Snake venom subfamily. Monomer. As to expression, expressed by the venom gland.

It localises to the secreted. In terms of biological role, degrades alpha chain of fibrinogen (FGA), and has strong caseinolytic activity. Cleaves oxidized insulin B-chain at '40-Tyr-|-Leu-41', '48-Phe-|-Phe-49' and '49-Phe-|-Tyr-50', and glucagon at the bonds '62-Tyr-|-Ser-63', 66-Leu-|-Asp-67' and '78-Leu-|-Met-79' bonds. This chain is Alpha-fibrinogenase-like, found in Daboia siamensis (Eastern Russel's viper).